The chain runs to 310 residues: Small ribosomal subunit biogenesis GTPase RsgA (310 aa).

One can recognise a CP-type G domain in the interval 77 to 238 (LSKQSHILAA…IIDTPGIKGF (162 aa)). GTP-binding positions include 126 to 129 (NKTD) and 180 to 188 (GNSGVGKST). Zn(2+)-binding residues include C262, C267, H269, and C275.

This sequence belongs to the TRAFAC class YlqF/YawG GTPase family. RsgA subfamily. As to quaternary structure, monomer. Associates with 30S ribosomal subunit, binds 16S rRNA. The cofactor is Zn(2+).

The protein localises to the cytoplasm. Functionally, one of several proteins that assist in the late maturation steps of the functional core of the 30S ribosomal subunit. Helps release RbfA from mature subunits. May play a role in the assembly of ribosomal proteins into the subunit. Circularly permuted GTPase that catalyzes slow GTP hydrolysis, GTPase activity is stimulated by the 30S ribosomal subunit. In Phocaeicola vulgatus (strain ATCC 8482 / DSM 1447 / JCM 5826 / CCUG 4940 / NBRC 14291 / NCTC 11154) (Bacteroides vulgatus), this protein is Small ribosomal subunit biogenesis GTPase RsgA.